Here is a 160-residue protein sequence, read N- to C-terminus: Cyclic pyranopterin monophosphate synthase (160 aa).

Substrate-binding positions include 74 to 76 and 112 to 113; these read LSH and ME. Residue aspartate 127 is part of the active site.

This sequence belongs to the MoaC family. In terms of assembly, homohexamer; trimer of dimers.

It carries out the reaction (8S)-3',8-cyclo-7,8-dihydroguanosine 5'-triphosphate = cyclic pyranopterin phosphate + diphosphate. It participates in cofactor biosynthesis; molybdopterin biosynthesis. Functionally, catalyzes the conversion of (8S)-3',8-cyclo-7,8-dihydroguanosine 5'-triphosphate to cyclic pyranopterin monophosphate (cPMP). The sequence is that of Cyclic pyranopterin monophosphate synthase from Pelobacter propionicus (strain DSM 2379 / NBRC 103807 / OttBd1).